Consider the following 921-residue polypeptide: DNA ligase (921 aa).

NAD(+)-binding positions include 90 to 94, 139 to 140, and E173; these read DAAYD and SL. K175 acts as the N6-AMP-lysine intermediate in catalysis. The NAD(+) site is built by R196, E235, K360, and K384. Residues C481, C484, C500, and C506 each contribute to the Zn(2+) site. The interval 663 to 688 is disordered; the sequence is EAAIESAETQGGAASETTGAPTGAEA. In terms of domain architecture, BRCT spans 839–921; sequence SLPQTLAGKT…AQLLETGSID (83 aa).

Belongs to the NAD-dependent DNA ligase family. LigA subfamily. Mg(2+) is required as a cofactor. Mn(2+) serves as cofactor.

It carries out the reaction NAD(+) + (deoxyribonucleotide)n-3'-hydroxyl + 5'-phospho-(deoxyribonucleotide)m = (deoxyribonucleotide)n+m + AMP + beta-nicotinamide D-nucleotide.. In terms of biological role, DNA ligase that catalyzes the formation of phosphodiester linkages between 5'-phosphoryl and 3'-hydroxyl groups in double-stranded DNA using NAD as a coenzyme and as the energy source for the reaction. It is essential for DNA replication and repair of damaged DNA. The protein is DNA ligase of Bifidobacterium longum subsp. infantis (strain ATCC 15697 / DSM 20088 / JCM 1222 / NCTC 11817 / S12).